The chain runs to 185 residues: Elongation factor P (185 aa).

It belongs to the elongation factor P family.

Its subcellular location is the cytoplasm. It participates in protein biosynthesis; polypeptide chain elongation. Involved in peptide bond synthesis. Stimulates efficient translation and peptide-bond synthesis on native or reconstituted 70S ribosomes in vitro. Probably functions indirectly by altering the affinity of the ribosome for aminoacyl-tRNA, thus increasing their reactivity as acceptors for peptidyl transferase. The chain is Elongation factor P from Geobacillus thermodenitrificans (strain NG80-2).